We begin with the raw amino-acid sequence, 93 residues long: Cobalt transport protein CbiN (93 aa).

2 helical membrane passes run Leu5–Gly25 and Leu63–Cys83.

It belongs to the CbiN family. Forms an energy-coupling factor (ECF) transporter complex composed of an ATP-binding protein (A component, CbiO), a transmembrane protein (T component, CbiQ) and 2 possible substrate-capture proteins (S components, CbiM and CbiN) of unknown stoichimetry.

It is found in the cell inner membrane. The protein operates within cofactor biosynthesis; adenosylcobalamin biosynthesis. Functionally, part of the energy-coupling factor (ECF) transporter complex CbiMNOQ involved in cobalt import. This Salmonella gallinarum (strain 287/91 / NCTC 13346) protein is Cobalt transport protein CbiN.